Reading from the N-terminus, the 685-residue chain is E3 ubiquitin-protein ligase RNF6 (685 aa).

3 stretches are compositionally biased toward basic and acidic residues: residues 1-10 (MNQSRSRSDG), 17-29 (PQDHNHHENERRW), and 88-107 (DLRDGTNYRDSEVPRESSHE). Disordered regions lie at residues 1 to 29 (MNQSRSRSDGGSEETLPQDHNHHENERRW), 81 to 107 (EQLASQPDLRDGTNYRDSEVPRESSHE), 121 to 142 (GNATRSGQNGNQTWRAVSRTNP), 168 to 273 (DYTD…REGQ), 286 to 345 (RSNV…RRRG), and 499 to 576 (EADS…NPNN). Polar residues-rich tracts occupy residues 199–213 (SQTSVNFNGSSSNIP), 250–264 (ASRTNFSSHTNQSGG), and 286–297 (RSNVTVRNTNQR). Residues 303 to 313 (LRSTSNSRSRS) are compositionally biased toward low complexity. Polar residues-rich tracts occupy residues 314 to 325 (PIQRQSGTVYHN) and 519 to 528 (ELSNLGTDNN). The RING-type zinc finger occupies 632–673 (CSVCISDYVTGNKLRQLPCMHEFHIHCIDRWLSENCTCPICR).

The protein belongs to the RNF12 family. In terms of tissue distribution, weakly expressed in peripheral blood, spleen, prostate, testis and ovary. According to a report, it is preferentially expressed in testis and ovary and hardly detected in other tissues.

It localises to the nucleus. The protein localises to the cytoplasm. The protein resides in the cell projection. Its subcellular location is the axon. It is found in the PML body. It catalyses the reaction S-ubiquitinyl-[E2 ubiquitin-conjugating enzyme]-L-cysteine + [acceptor protein]-L-lysine = [E2 ubiquitin-conjugating enzyme]-L-cysteine + N(6)-ubiquitinyl-[acceptor protein]-L-lysine.. Its pathway is protein modification; protein ubiquitination. Its function is as follows. E3 ubiquitin-protein ligase mediating 'Lys-48'-linked polyubiquitination of LIMK1 and its subsequent targeting to the proteasome for degradation. Negatively regulates axonal outgrowth through regulation of the LIMK1 turnover. Mediates 'Lys-6' and 'Lys-27'-linked polyubiquitination of AR/androgen receptor thereby modulating its transcriptional activity. May also bind DNA and function as a transcriptional regulator. Mediates polyubiquitination of QKI in macrophages, leading to its degradation. The sequence is that of E3 ubiquitin-protein ligase RNF6 from Homo sapiens (Human).